A 217-amino-acid chain; its full sequence is Translation initiation factor IF-3 (217 aa).

Residues 170–217 are disordered; that stretch reads KKTEAMAEARQAQEARKADAKANPGKSQNAAETDDAEAEAPAEAPAEA. The segment covering 172 to 189 has biased composition (basic and acidic residues); the sequence is TEAMAEARQAQEARKADA.

The protein belongs to the IF-3 family. Monomer.

Its subcellular location is the cytoplasm. Functionally, IF-3 binds to the 30S ribosomal subunit and shifts the equilibrium between 70S ribosomes and their 50S and 30S subunits in favor of the free subunits, thus enhancing the availability of 30S subunits on which protein synthesis initiation begins. The sequence is that of Translation initiation factor IF-3 from Streptomyces coelicolor (strain ATCC BAA-471 / A3(2) / M145).